The sequence spans 382 residues: Anhydro-N-acetylmuramic acid kinase (382 aa).

Gly9–Asp16 contributes to the ATP binding site.

It belongs to the anhydro-N-acetylmuramic acid kinase family.

The catalysed reaction is 1,6-anhydro-N-acetyl-beta-muramate + ATP + H2O = N-acetyl-D-muramate 6-phosphate + ADP + H(+). The protein operates within amino-sugar metabolism; 1,6-anhydro-N-acetylmuramate degradation. It functions in the pathway cell wall biogenesis; peptidoglycan recycling. Functionally, catalyzes the specific phosphorylation of 1,6-anhydro-N-acetylmuramic acid (anhMurNAc) with the simultaneous cleavage of the 1,6-anhydro ring, generating MurNAc-6-P. Is required for the utilization of anhMurNAc either imported from the medium or derived from its own cell wall murein, and thus plays a role in cell wall recycling. The sequence is that of Anhydro-N-acetylmuramic acid kinase from Bacillus cereus (strain 03BB102).